A 105-amino-acid polypeptide reads, in one-letter code: Cyclotide vibi-E (105 aa).

An N-terminal signal peptide occupies residues 1–9; that stretch reads AAFALPALA. Positions 10–69 are excised as a propeptide; sequence SSFEKDVISFRAIQAVLEKRGLSKLEDDPVLSALAHTKTIISNPVIEEALLNGANLKAGN. Residues 70–99 constitute a cross-link (cyclopeptide (Gly-Asn)); that stretch reads GIPCAESCVWIPCTVTALIGCGCSNKVCYN. 3 cysteine pairs are disulfide-bonded: Cys-73–Cys-90, Cys-77–Cys-92, and Cys-82–Cys-97. The propeptide occupies 100-105; the sequence is SLQTKY.

In terms of processing, this is a cyclic peptide.

Functionally, probably participates in a plant defense mechanism. Has cytotoxic activity, active against a human lymphoma cell line with an IC(50) of 3.2 uM. The chain is Cyclotide vibi-E from Viola biflora (Yellow wood violet).